A 456-amino-acid polypeptide reads, in one-letter code: Chaperone protein dnaJ GFA2, mitochondrial (456 aa).

A mitochondrion-targeting transit peptide spans 1 to 89 (MVPSNGAKVL…RSFHGTGSSF (89 aa)). A J domain is found at 94 to 159 (DYYSVLGVSK…EKRDLYDQVG (66 aa)). Residues 225-303 (GCSKTVTFQT…CRGARVVRGQ (79 aa)) form a CR-type zinc finger. The Zn(2+) site is built by C238, C241, C255, C258, C277, C280, C291, and C294. CXXCXGXG motif repeat units follow at residues 238–245 (CNTCGGQG), 255–262 (CKACNGSG), 277–284 (CQKCGGAG), and 291–298 (CKSCRGAR).

This sequence belongs to the DnaJ family. As to expression, widely expressed.

It localises to the mitochondrion. In terms of biological role, chaperone that may play a role in mitochondrial protein folding. Involved in female gametophyte development. Required for cell death of the synergid cells during fertilization process, and fusion of the polar nuclei during megagametogenesis. This Arabidopsis thaliana (Mouse-ear cress) protein is Chaperone protein dnaJ GFA2, mitochondrial.